Consider the following 614-residue polypeptide: Glucosidase 2 subunit beta (614 aa).

Residues methionine 1–alanine 20 form the signal peptide. N-linked (GlcNAc...) asparagine glycosylation occurs at asparagine 115. 3 stretches are compositionally biased toward basic and acidic residues: residues glutamate 194–serine 222, glutamine 231–glutamate 272, and threonine 324–glutamate 351. Residues glutamate 194–aspartate 396 are disordered. Over residues threonine 352 to glutamate 364 the composition is skewed to acidic residues. The span at serine 372–aspartate 382 shows a compositional bias: basic and acidic residues. Residues aspartate 383–aspartate 396 show a composition bias toward acidic residues. The MRH domain occupies aspartate 497–glutamate 592. 3 cysteine pairs are disulfide-bonded: cysteine 499-cysteine 512, cysteine 549-cysteine 578, and cysteine 563-cysteine 590.

As to quaternary structure, heterodimer of a catalytic alpha subunit and a beta subunit.

The protein resides in the endoplasmic reticulum. The protein operates within glycan metabolism; N-glycan metabolism. Regulatory subunit of glucosidase II. May be required for defense response elicited by pathogen-associated molecular patterns (PAMPs). In Oryza sativa subsp. indica (Rice), this protein is Glucosidase 2 subunit beta.